The sequence spans 307 residues: Mitogen-activated protein kinase kinase 7 (307 aa).

Residues V45 to L303 form the Protein kinase domain. Residues L51–V59 and K74 contribute to the ATP site. D165 serves as the catalytic Proton acceptor. 2 positions are modified to phosphoserine: S193 and S199. Position 203 is a phosphothreonine (T203).

The protein belongs to the protein kinase superfamily. STE Ser/Thr protein kinase family. MAP kinase kinase subfamily. As to quaternary structure, interacts with MPK15. Post-translationally, phosphorylation at Ser-193 and Ser-199 by MAP kinase kinase kinases positively regulates kinase activity. Expressed in all tissues, with a relatively higher level in leaves and lower level in roots and flowers.

The enzyme catalyses L-seryl-[protein] + ATP = O-phospho-L-seryl-[protein] + ADP + H(+). It carries out the reaction L-threonyl-[protein] + ATP = O-phospho-L-threonyl-[protein] + ADP + H(+). It catalyses the reaction L-tyrosyl-[protein] + ATP = O-phospho-L-tyrosyl-[protein] + ADP + H(+). Its function is as follows. May function as a negative regulator of polar auxin transport. Positively regulates plant basal and systemic acquired resistance (SAR). Activates MPK3 and MPK6 in vitro. This is Mitogen-activated protein kinase kinase 7 (MKK7) from Arabidopsis thaliana (Mouse-ear cress).